The chain runs to 223 residues: Serine/threonine/tyrosine-interacting protein B (223 aa).

One can recognise a Tyrosine-protein phosphatase domain in the interval 28–176; it reads EMQEILPGLF…LQEYEAIYLA (149 aa).

It belongs to the protein-tyrosine phosphatase family. Non-receptor class subfamily.

In terms of biological role, catalytically inactive phosphatase. This chain is Serine/threonine/tyrosine-interacting protein B (styx-b), found in Xenopus laevis (African clawed frog).